A 955-amino-acid chain; its full sequence is 2-oxoglutarate dehydrogenase E1 component (955 aa).

The protein belongs to the alpha-ketoglutarate dehydrogenase family. In terms of assembly, homodimer. Part of the 2-oxoglutarate dehydrogenase (OGDH) complex composed of E1 (2-oxoglutarate dehydrogenase), E2 (dihydrolipoamide succinyltransferase) and E3 (dihydrolipoamide dehydrogenase); the complex contains multiple copies of the three enzymatic components (E1, E2 and E3). Requires thiamine diphosphate as cofactor.

It catalyses the reaction N(6)-[(R)-lipoyl]-L-lysyl-[protein] + 2-oxoglutarate + H(+) = N(6)-[(R)-S(8)-succinyldihydrolipoyl]-L-lysyl-[protein] + CO2. Its function is as follows. E1 component of the 2-oxoglutarate dehydrogenase (OGDH) complex which catalyzes the decarboxylation of 2-oxoglutarate, the first step in the conversion of 2-oxoglutarate to succinyl-CoA and CO(2). This chain is 2-oxoglutarate dehydrogenase E1 component, found in Bacillus cereus (strain AH187).